A 122-amino-acid chain; its full sequence is Large ribosomal subunit protein uL14 (122 aa).

Belongs to the universal ribosomal protein uL14 family. As to quaternary structure, part of the 50S ribosomal subunit. Forms a cluster with proteins L3 and L19. In the 70S ribosome, L14 and L19 interact and together make contacts with the 16S rRNA in bridges B5 and B8.

Functionally, binds to 23S rRNA. Forms part of two intersubunit bridges in the 70S ribosome. The protein is Large ribosomal subunit protein uL14 of Bacillus pumilus (strain SAFR-032).